Here is a 490-residue protein sequence, read N- to C-terminus: 5'-3' exonuclease PLD3 (490 aa).

The Cytoplasmic portion of the chain corresponds to 1–38; sequence MKPKLMYQELKVPAEEPANELPMNEIEAWKAAEKKARW. Residues 39 to 59 traverse the membrane as a helical; Signal-anchor for type II membrane protein segment; sequence VLLVLILAVVGFGALMTQLFL. Residues 60–490 are Lumenal-facing; that stretch reads WEYGDLHLFG…DSVGNACRLL (431 aa). Intrachain disulfides connect C77/C239 and C81/C237. 2 N-linked (GlcNAc...) asparagine glycosylation sites follow: N97 and N132. A PLD phosphodiesterase 1 domain is found at 196 to 223; sequence THGVLHTKFWVVDQTHFYLGSANMDWRS. Catalysis depends on residues H201, K203, and D208. The active-site Proton donor is H201. H201 and K203 together coordinate phosphate. Residue N218 coordinates phosphate. N236, N284, and N387 each carry an N-linked (GlcNAc...) asparagine glycan. A disulfide bridge connects residues C366 and C487. The 27-residue stretch at 411–437 folds into the PLD phosphodiesterase 2 domain; that stretch reads YARVNHNKYMVTERATYIGTSNWSGNY. H416 is a binding site for phosphate. Residue H416 is the Nucleophile of the active site. F438 lines the Mg(2+) pocket.

It belongs to the phospholipase D family. In terms of assembly, homodimer. Interacts with APP. N-glycosylated. Post-translationally, proteolytically processed to a soluble active form that is stable within endosomes and lysosomes. During transport through the secretory pathway becomes proteolysed by cysteine proteases, thereby releasing a stable soluble lysosomal lumenal polypeptide, whereas the transmembrane-bound fragment is rapidly degraded. Its transport route to lysosomes involves ubiquitination and the ESCRT complex. In terms of processing, ubiquitinated at N-terminus. Ubiquitination mediates sorting into lysosomes. As to expression, widely expressed. In the brain, high levels of expression are detected in the frontal, temporal and occipital cortices and hippocampus. Expressed at low level in corpus callosum. Expressed in plasmacytoid dendritic cells and monocytes (at protein level).

It localises to the endoplasmic reticulum membrane. The protein resides in the lysosome lumen. It is found in the early endosome membrane. Its subcellular location is the late endosome membrane. The protein localises to the golgi apparatus membrane. It localises to the endosome membrane. It carries out the reaction Exonucleolytic cleavage in the 5'- to 3'-direction to yield nucleoside 3'-phosphates.. The enzyme catalyses a 5'-end 5'-dephospho-ribonucleotidyl-ribonucleotide-RNA + H2O = a ribonucleoside 3'-phosphate + a 5'-end dephospho-ribonucleoside-RNA + H(+). It catalyses the reaction a ribonucleoside 3'-phosphate-2'-3'-cyclophospho-GMP + H2O = a ribonucleoside 3'-phosphate + 2',3'-cyclophospho-GMP + H(+). The catalysed reaction is a 5'-end 5'-dephospho-2'-deoxyribonucleotidyl-2'-deoxyribonucleotide in single-stranded DNA + H2O = a 5'-end dephospho-2'-deoxyribonucleoside in single-stranded DNA + a 2'-deoxyribonucleoside 3'-phosphate + H(+). It carries out the reaction a 5'-end 5'-phospho-2'-deoxyribonucleotide in single-stranded DNA + H2O = a 5'-end 5'-dephospho-2'-deoxyribonucleotide in single-stranded DNA + phosphate. The enzyme catalyses a 3-lyso-sn-glycero-1-phospho-(3'-acyl-1'-sn-glycerol) + a 1-acyl-sn-glycerol = a 3-acyl-sn-glycero-1-phospho-(3'-acyl-1'-sn-glycerol) + glycerol. It catalyses the reaction 3-lyso-sn-glycero-1-phospho-(3'-(9Z-octadecenoyl)-1'-sn-glycerol) + 1-(9Z-octadecenoyl)-sn-glycerol = 3-(9Z-octadecenoyl)-sn-glycero-1-phospho-(3'-(9Z-octadecenoyl)-1'-sn-glycerol) + glycerol. The exonuclease activity toward ssDNA substrate is Ca(2+) and Mg(2+)-independent, but it is inhibited by Fe(2+), Cu(2+) and to a lesser extent Zn(2+) ions. 5'-&gt;3' exonuclease that hydrolyzes the phosphodiester bond of single-stranded DNA (ssDNA) and RNA molecules to form nucleoside 3'-monophosphates and 5'-end 5'-hydroxy deoxyribonucleotide/ribonucleotide fragments. Partially redundant with PLD4, can cleave all four nucleotides displaying higher efficiency for ssDNA and RNA fragments initiated with uridine and guanosine residues and lower efficiency for cytidine-initiated substrates. As a result, it does not always degrade polynucleotides to the single nucleotide level, it can stall at specific sites sparing certain fragments from exonucleolytic degradation. Processes self and pathogenic ssDNA and RNA molecules that reach the endolysosomal compartment via phagocytosis or autophagy and may serve as 'danger' signals for recognition by innate immune receptors such as toll-like receptors (TLRs). Degrades mitochondrial CpG-rich ssDNA fragments to prevent TLR9 activation and autoinflammatory response, but it can cleave viral RNA to generate ligands for TLR7 activation and initiate antiviral immune responses. In plasmacytoid dendritic cells, it cooperates with endonuclease RNASET2 to release 2',3'-cyclic guanosine monophosphate (2',3'-cGMP), a potent stimulatory ligand for TLR7. Produces 2',3'-cGMPs and cytidine-rich RNA fragments that occupy TLR7 ligand-binding pockets and trigger a signaling-competent state. Can exert polynucleotide phosphatase activity toward 5'-phosphorylated ssDNA substrates although at a slow rate. Transphosphatidylase that catalyzes the exchange with R to S stereo-inversion of the glycerol moiety between (S,R)-lysophosphatidylglycerol (LPG) and monoacylglycerol (MAG) substrates to yield (S,S)-bis(monoacylglycero)phosphate (BMP). Can synthesize a variety of (S,S)-BMPs representing the main phospholipid constituent of lysosomal intralumenal vesicle (ILV) membranes that bind acid hydrolases for lipid degradation. Regulates the homeostasis and interorganellar communication of the endolysosomal system with an overall impact on cellular removal of dysfunctional organelles via autophagy as well as proper protein and lipid turnover. May play a role in myotube formation in response to ER stress. In Homo sapiens (Human), this protein is 5'-3' exonuclease PLD3.